Here is a 628-residue protein sequence, read N- to C-terminus: NUAK family SNF1-like kinase 2 (628 aa).

Methionine 1 carries the N-acetylmethionine modification. The Protein kinase domain maps to 53–303 (YEFLETLGKG…LEDVASHWWV (251 aa)). ATP is bound by residues 59-67 (LGKGTYGKV) and lysine 81. Residue aspartate 175 is the Proton acceptor of the active site. Threonine 208 is modified (phosphothreonine; by LKB1). Residues 355-493 (KQHAPGGGST…KEQKPPQASG (139 aa)) are disordered. A Phosphoserine modification is found at serine 435. The segment covering 457–469 (SGYYSSPEPSESG) has biased composition (low complexity). 4 positions are modified to phosphoserine: serine 523, serine 544, serine 547, and serine 573. A disordered region spans residues 531-562 (RPLARASRPSGAVSEDSILSSESFDQLDLPER).

Belongs to the protein kinase superfamily. CAMK Ser/Thr protein kinase family. SNF1 subfamily. It depends on Mg(2+) as a cofactor. Post-translationally, phosphorylated at Thr-208 by STK11/LKB1 in complex with STE20-related adapter-alpha (STRADA) pseudo kinase and CAB39. Autophosphorylation is also possible at Thr-208.

The enzyme catalyses L-seryl-[protein] + ATP = O-phospho-L-seryl-[protein] + ADP + H(+). The catalysed reaction is L-threonyl-[protein] + ATP = O-phospho-L-threonyl-[protein] + ADP + H(+). Activated by phosphorylation on Thr-208. Stress-activated kinase involved in tolerance to glucose starvation. Induces cell-cell detachment by increasing F-actin conversion to G-actin. Expression is induced by CD95 or TNF-alpha, via NF-kappa-B. Protects cells from CD95-mediated apoptosis and is required for the increased motility and invasiveness of CD95-activated tumor cells. Phosphorylates LATS1 and LATS2. Plays a key role in neural tube closure during embryonic development through LATS2 phosphorylation and regulation of the nuclear localization of YAP1 a critical downstream regulatory target in the Hippo signaling pathway. In Homo sapiens (Human), this protein is NUAK family SNF1-like kinase 2.